A 252-amino-acid chain; its full sequence is MTQTPEALTTEQFKQAIIDKGQYYHIYHPFHVMMYEGKATQQQIQAWVANRYYYQINIPLKDAAIMANCPDQRVRQEWIQRMIDQDGEYPDGGGREAWLRLAEAVGLSREQVISEELVLPGVRFAVDAYVNFARRASWREAASSSLTELFAPQIHQSRLESWPQHYPWIDDKGYEYFRSRLSQARRDVEHGLTITLDSFTTHEQQQRMLEILQFKLDILWSILDALTLAYVHNEAPYHSVTQERVWHKGLFK.

The protein belongs to the PqqC family.

It catalyses the reaction 6-(2-amino-2-carboxyethyl)-7,8-dioxo-1,2,3,4,7,8-hexahydroquinoline-2,4-dicarboxylate + 3 O2 = pyrroloquinoline quinone + 2 H2O2 + 2 H2O + H(+). Its pathway is cofactor biosynthesis; pyrroloquinoline quinone biosynthesis. Functionally, ring cyclization and eight-electron oxidation of 3a-(2-amino-2-carboxyethyl)-4,5-dioxo-4,5,6,7,8,9-hexahydroquinoline-7,9-dicarboxylic-acid to PQQ. The sequence is that of Pyrroloquinoline-quinone synthase from Acinetobacter baumannii (strain AB307-0294).